Here is a 750-residue protein sequence, read N- to C-terminus: Dual specificity tyrosine-phosphorylation-regulated kinase 1A (750 aa).

2 disordered regions span residues A56 to A81 and Y104 to N129. The Bipartite nuclear localization signal motif lies at R109 to K126. In terms of domain architecture, Protein kinase spans Y151–F471. Residues I157–V165, K180, and F230–L233 contribute to the ATP site. The Proton acceptor role is filled by D279. Disordered stretches follow at residues T400 to S434, E477 to G531, S583 to A666, and D731 to S750. Polar residues predominate over residues E477–Q493. The segment covering S494–G517 has biased composition (low complexity). The segment at Q584–S612 is histidine-rich domain (HRD). The span at V587–Q608 shows a compositional bias: basic residues. Over residues I610 to N621 the composition is skewed to polar residues. The span at S622–T659 shows a compositional bias: low complexity. Residues C741–S750 show a composition bias toward polar residues.

This sequence belongs to the protein kinase superfamily. CMGC Ser/Thr protein kinase family. MNB/DYRK subfamily. In terms of processing, autophosphorylated on tyrosine residues.

It localises to the nucleus. It is found in the nucleus speckle. The catalysed reaction is L-seryl-[protein] + ATP = O-phospho-L-seryl-[protein] + ADP + H(+). The enzyme catalyses L-threonyl-[protein] + ATP = O-phospho-L-threonyl-[protein] + ADP + H(+). It carries out the reaction L-tyrosyl-[protein] + ATP = O-phospho-L-tyrosyl-[protein] + ADP + H(+). It catalyses the reaction [DNA-directed RNA polymerase] + ATP = phospho-[DNA-directed RNA polymerase] + ADP + H(+). Its function is as follows. Dual-specificity kinase which possesses both serine/threonine and tyrosine kinase activities. Exhibits a substrate preference for proline at position P+1 and arginine at position P-3. Plays an important role in double-strand breaks (DSBs) repair following DNA damage. Mechanistically, phosphorylates RNF169 and increases its ability to block accumulation of TP53BP1 at the DSB sites thereby promoting homologous recombination repair (HRR). Also acts as a positive regulator of transcription by acting as a CTD kinase that mediates phosphorylation of the CTD (C-terminal domain) of the large subunit of RNA polymerase II (RNAP II) POLR2A. Modulates alternative splicing by phosphorylating the splice factor SRSF6. Phosphorylates SEPTIN4, SEPTIN5 and SF3B1. The protein is Dual specificity tyrosine-phosphorylation-regulated kinase 1A of Xenopus laevis (African clawed frog).